A 205-amino-acid polypeptide reads, in one-letter code: Probable GTP-binding protein EngB (205 aa).

The EngB-type G domain occupies 29-203 (QGAEIAFIGR…KAVLSQWFRS (175 aa)). Residues 37-44 (GRSNAGKS), 64-68 (GRTQM), 82-85 (DLPG), 149-152 (TKSD), and 182-184 (FSS) each bind GTP. Mg(2+) is bound by residues serine 44 and threonine 66.

This sequence belongs to the TRAFAC class TrmE-Era-EngA-EngB-Septin-like GTPase superfamily. EngB GTPase family. Mg(2+) is required as a cofactor.

Functionally, necessary for normal cell division and for the maintenance of normal septation. The chain is Probable GTP-binding protein EngB from Coxiella burnetii (strain RSA 331 / Henzerling II).